A 468-amino-acid chain; its full sequence is Serine/threonine-protein phosphatase 2A 55 kDa regulatory subunit B beta isoform (468 aa).

7 WD repeats span residues 47–86 (SSAD…KNQP), 112–153 (EIEE…KRPE), 196–234 (AHTY…RSFN), 245–285 (ELTE…LCDK), 304–342 (EIIS…RPIE), 359–400 (ENDC…DVTL), and 435–468 (DFSK…DKVN).

This sequence belongs to the phosphatase 2A regulatory subunit B family. PP2A consists of a common heterodimeric core enzyme, composed of a 36 kDa catalytic subunit (subunit C) and a 65 kDa constant regulatory subunit (PR65 or subunit A), that associates with a variety of regulatory subunits.

Its subcellular location is the cytoplasm. It localises to the cytoskeleton. The protein resides in the membrane. Its function is as follows. The B regulatory subunit might modulate substrate selectivity and catalytic activity, and might also direct the localization of the catalytic enzyme to a particular subcellular compartment. Negatively controls the initiation of oocyte maturation. The polypeptide is Serine/threonine-protein phosphatase 2A 55 kDa regulatory subunit B beta isoform (ppp2r2b) (Xenopus laevis (African clawed frog)).